We begin with the raw amino-acid sequence, 470 residues long: Chromosomal replication initiator protein DnaA (470 aa).

The segment at 1 to 68 (MENFWSLCLG…SALAEEVLST (68 aa)) is domain I, interacts with DnaA modulators. Residues 68–133 (TPVQIELALY…KKPKTLTETS (66 aa)) form a domain II region. Residues 134 to 350 (GLNPAFRFDN…GALNRIIAMA (217 aa)) form a domain III, AAA+ region region. Residues Gly-178, Gly-180, Lys-181, and Thr-182 each coordinate ATP. A domain IV, binds dsDNA region spans residues 351-470 (NFTGHAIDVS…IAVLIQVIRD (120 aa)).

Belongs to the DnaA family. As to quaternary structure, oligomerizes as a right-handed, spiral filament on DNA at oriC.

The protein resides in the cytoplasm. In terms of biological role, plays an essential role in the initiation and regulation of chromosomal replication. ATP-DnaA binds to the origin of replication (oriC) to initiate formation of the DNA replication initiation complex once per cell cycle. Binds the DnaA box (a 9 base pair repeat at the origin) and separates the double-stranded (ds)DNA. Forms a right-handed helical filament on oriC DNA; dsDNA binds to the exterior of the filament while single-stranded (ss)DNA is stabiized in the filament's interior. The ATP-DnaA-oriC complex binds and stabilizes one strand of the AT-rich DNA unwinding element (DUE), permitting loading of DNA polymerase. After initiation quickly degrades to an ADP-DnaA complex that is not apt for DNA replication. Binds acidic phospholipids. The chain is Chromosomal replication initiator protein DnaA from Methylobacillus flagellatus (strain ATCC 51484 / DSM 6875 / VKM B-1610 / KT).